The following is a 492-amino-acid chain: Trigger factor (492 aa).

The disordered stretch occupies residues Glu77 to Glu96. Residues Gly169–Val254 enclose the PPIase FKBP-type domain. A disordered region spans residues Glu439 to Glu492.

Belongs to the FKBP-type PPIase family. Tig subfamily.

The protein resides in the cytoplasm. The catalysed reaction is [protein]-peptidylproline (omega=180) = [protein]-peptidylproline (omega=0). In terms of biological role, involved in protein export. Acts as a chaperone by maintaining the newly synthesized protein in an open conformation. Functions as a peptidyl-prolyl cis-trans isomerase. This is Trigger factor from Agrobacterium fabrum (strain C58 / ATCC 33970) (Agrobacterium tumefaciens (strain C58)).